The following is a 278-amino-acid chain: Sulfur carrier protein FdhD (278 aa).

The Cysteine persulfide intermediate role is filled by cysteine 121. A Mo-bis(molybdopterin guanine dinucleotide)-binding site is contributed by 260-265; sequence FCKPGR.

This sequence belongs to the FdhD family.

The protein resides in the cytoplasm. Its function is as follows. Required for formate dehydrogenase (FDH) activity. Acts as a sulfur carrier protein that transfers sulfur from IscS to the molybdenum cofactor prior to its insertion into FDH. The chain is Sulfur carrier protein FdhD from Salmonella heidelberg (strain SL476).